The primary structure comprises 377 residues: 3-dehydroquinate synthase (377 aa).

Residues 113 to 117 (GVIGD), 137 to 138 (TT), lysine 150, and lysine 159 each bind NAD(+). The Zn(2+) site is built by glutamate 192, histidine 254, and histidine 273.

It belongs to the sugar phosphate cyclases superfamily. Dehydroquinate synthase family. Requires Co(2+) as cofactor. It depends on Zn(2+) as a cofactor. NAD(+) is required as a cofactor.

Its subcellular location is the cytoplasm. The catalysed reaction is 7-phospho-2-dehydro-3-deoxy-D-arabino-heptonate = 3-dehydroquinate + phosphate. Its pathway is metabolic intermediate biosynthesis; chorismate biosynthesis; chorismate from D-erythrose 4-phosphate and phosphoenolpyruvate: step 2/7. Functionally, catalyzes the conversion of 3-deoxy-D-arabino-heptulosonate 7-phosphate (DAHP) to dehydroquinate (DHQ). This is 3-dehydroquinate synthase from Bartonella bacilliformis (strain ATCC 35685 / KC583 / Herrer 020/F12,63).